A 261-amino-acid chain; its full sequence is Tryptophan synthase alpha chain (261 aa).

Active-site proton acceptor residues include E47 and D58.

It belongs to the TrpA family. In terms of assembly, tetramer of two alpha and two beta chains.

It catalyses the reaction (1S,2R)-1-C-(indol-3-yl)glycerol 3-phosphate + L-serine = D-glyceraldehyde 3-phosphate + L-tryptophan + H2O. Its pathway is amino-acid biosynthesis; L-tryptophan biosynthesis; L-tryptophan from chorismate: step 5/5. Its function is as follows. The alpha subunit is responsible for the aldol cleavage of indoleglycerol phosphate to indole and glyceraldehyde 3-phosphate. This chain is Tryptophan synthase alpha chain, found in Neisseria gonorrhoeae (strain ATCC 700825 / FA 1090).